Reading from the N-terminus, the 158-residue chain is Endoribonuclease YbeY (158 aa).

Histidine 121, histidine 125, and histidine 131 together coordinate Zn(2+).

It belongs to the endoribonuclease YbeY family. Zn(2+) is required as a cofactor.

It is found in the cytoplasm. Functionally, single strand-specific metallo-endoribonuclease involved in late-stage 70S ribosome quality control and in maturation of the 3' terminus of the 16S rRNA. This is Endoribonuclease YbeY from Exiguobacterium sibiricum (strain DSM 17290 / CCUG 55495 / CIP 109462 / JCM 13490 / 255-15).